A 176-amino-acid polypeptide reads, in one-letter code: Centromere protein R (176 aa).

K8 is covalently cross-linked (Glycyl lysine isopeptide (Lys-Gly) (interchain with G-Cter in SUMO2)). A Phosphoserine modification is found at S17. Positions 20–50 (PSKIVRKKSITAYSPTTGTYQLSPFSSPATP) are DD1. K22 is covalently cross-linked (Glycyl lysine isopeptide (Lys-Gly) (interchain with G-Cter in SUMO2)). S28 is subject to Phosphoserine. Over residues 34–48 (PTTGTYQLSPFSSPA) the composition is skewed to polar residues. Residues 34-78 (PTTGTYQLSPFSSPATPKEQEHRNGPSNETRKRSNLSSPVRQEST) are disordered. Basic and acidic residues predominate over residues 51-65 (KEQEHRNGPSNETRK). A Nuclear localization signal motif is present at residues 63–66 (TRKR). A Phosphoserine modification is found at S71. A coiled-coil region spans residues 82-112 (RDGFMVLLSKIEISSEKTMEIMKNLSSIQAL). The LXXIL motif motif lies at 171–175 (LKAIL).

As to quaternary structure, homodimer; mediated by the coiled coil domain. Interacts with CCNA2 and MTA1. Interacts with NFKB1 NF-kappa-B subunit. Component of the CENPA-CAD complex, composed of CENPI, CENPK, CENPL, CENPO, CENPP, CENPQ, CENPR and CENPS. The CENPA-CAD complex interacts with the CENPA-NAC complex, at least composed of CENPA, CENPC, CENPH, CENPM, CENPN, CENPT and CENPU. Interacts with TASOR. In terms of tissue distribution, expressed in the spermatogonia and spermatocytes.

It localises to the nucleus. The protein resides in the chromosome. The protein localises to the centromere. It is found in the kinetochore. Its function is as follows. Transcription coregulator that can have both coactivator and corepressor functions. Involved in the coactivation of nuclear receptors for retinoid X (RXRs) and thyroid hormone (TRs) in a ligand-dependent fashion. In contrast, it does not coactivate nuclear receptors for retinoic acid, vitamin D, progesterone receptor, nor glucocorticoid. Acts as a coactivator for estrogen receptor alpha. Acts as a transcriptional corepressor via its interaction with the NFKB1 NF-kappa-B subunit, possibly by interfering with the transactivation domain of NFKB1. Induces apoptosis in breast cancer cells, but not in other cancer cells, via a caspase-2 mediated pathway that involves mitochondrial membrane permeabilization but does not require other caspases. May also act as an inhibitor of cyclin A-associated kinase. Also acts a component of the CENPA-CAD (nucleosome distal) complex, a complex recruited to centromeres which is involved in assembly of kinetochore proteins, mitotic progression and chromosome segregation. May be involved in incorporation of newly synthesized CENPA into centromeres via its interaction with the CENPA-NAC complex. The polypeptide is Centromere protein R (Itgb3bp) (Mus musculus (Mouse)).